Reading from the N-terminus, the 593-residue chain is MTAVAWPYANGPRHIGHVSGFGVPSDVFSRYQRMAGNRVLMVSGTDEHGTPISVQADKEGLSTRELADKYNRVITEDLQGLGLSYDLFTRTTTGNHYEVVQQIFLALHRNGYIIPKTTTGAISPSTGRTLPDRYIEGTCPICGYDGARGDQCDNCGNQLDPAELINPVSRINGEKPDFVETEHLFLDLSAFTESLGKWLSTRTGWRSNVLKFTQNLVEDMRPRAISRDLDWGVPIPLDGWRDQSMKRLYVWFDAVIGYFSASVEWARRTGDPDAWKQFWTDPSAQGYYFMGKDNITFHAQIWPALLMGHNGQGDKGGEVGPYGQLNLPDEIVSSEFLTMSGSKFSTSRGTVIYVRDFLREFGPDTLRYFISVAGPENQDTDFTWDEFVRRVNFELANEWGNLVNRSVSMAAKNNGAVPAPTSPRAADEELKTLSRNAFETVGGHLQRSRFKAAAQEAMRVVSAANKYLSDQEPWKLKEDPDRRDAVLHTALQVVSDANTLLTPFLPHSAQKVHELLGGTGVWSAQPELREVSDLDVPEREYPVLMGDYAAEQASWESTEIEVGRPLHKPTPLFAKLDAALGETGPEWAPIEKS.

The short motif at P7–H17 is the 'HIGH' region element. The Zn(2+) site is built by C139, C142, C152, and C155. Residues K343–S347 carry the 'KMSKS' region motif. T346 serves as a coordination point for ATP.

This sequence belongs to the class-I aminoacyl-tRNA synthetase family. MetG type 1 subfamily. Monomer. The cofactor is Zn(2+).

It is found in the cytoplasm. It catalyses the reaction tRNA(Met) + L-methionine + ATP = L-methionyl-tRNA(Met) + AMP + diphosphate. Is required not only for elongation of protein synthesis but also for the initiation of all mRNA translation through initiator tRNA(fMet) aminoacylation. The protein is Methionine--tRNA ligase of Saccharopolyspora erythraea (strain ATCC 11635 / DSM 40517 / JCM 4748 / NBRC 13426 / NCIMB 8594 / NRRL 2338).